A 710-amino-acid polypeptide reads, in one-letter code: Dual specificity protein kinase shkE (710 aa).

Low complexity-rich tracts occupy residues 83–94, 107–129, and 197–208; these read DVSDSNNNNSTS, NNNNNNNNNNNNNNNNNNNNNNN, and QKQQQSQASIQQ. Disordered regions lie at residues 83 to 136 and 189 to 232; these read DVSD…PTVI and QHLT…IPPE. The Protein kinase domain occupies 237-495; sequence DVKTDLLGGG…EVTQRMNEVL (259 aa). ATP contacts are provided by residues 243-251 and K264; that span reads LGGGAYGKV. D359 acts as the Proton acceptor in catalysis. In terms of domain architecture, SH2 spans 597 to 707; the sequence is WFHFDISRDI…CPITEIKVPY (111 aa).

The protein belongs to the protein kinase superfamily. Ser/Thr protein kinase family. SH2 domain-containing protein kinase subfamily.

The protein localises to the membrane. The enzyme catalyses L-seryl-[protein] + ATP = O-phospho-L-seryl-[protein] + ADP + H(+). The catalysed reaction is L-threonyl-[protein] + ATP = O-phospho-L-threonyl-[protein] + ADP + H(+). In terms of biological role, required for proper chemotaxis and phagocytosis; proper spatiotemporal control of F-actin levels in chemotaxing cells. Negative regulator of the PI3K (phosphatidylinositol 3 kinase) pathway. Predominantly phosphorylates serines and threonines and tyrosines at a lower level. This chain is Dual specificity protein kinase shkE (shkE), found in Dictyostelium discoideum (Social amoeba).